The sequence spans 1240 residues: MPTLWSPSTQHHGSSSGSESSPLQKSVRRAQMALSPCSSSILPCDDRDSQGTAEWDSPSTNEDSDFEDSLRRNVKKRAAKQPPKAVPAAKHRKKQSRIVSSGNGKNESVPSTNYLFDAVKAARSCMQSLVDEWLDNYKQDENAGFLELINFFIRACGCKSTVTPEMFKTMSNSEIIQHLTEEFNEDSGDYPLTAPGPSWKKFQGSFCEFVKTLVYQCQYSLLYDGFPMDDLISLLIGLSDSQVRAFRHTSTLAAMKLMTSLVKVALQLSLHKDNNQRQYEAERNKGPEQRAPERLESLLEKRKEFQENQEDIEGMMNAIFRGVFVHRYRDILPEIRAICIEEIGYWMQSYSTSFLNDSYLKYIGWTLHDKHKEVRLKCVKALAGLYSNQELSLRMELFTNRFKDRMVSMVMDRECEVAVEAIRLLTLILKNMEGVLTSADCEKIYSIVYISNRAMASSAGEFVYWKIFHPECGAKAVSDRERRRSPQAQKTFIYLLLAFFMESEHHNHAAYLVDSLWDCAGSYLKDWESLTNLLLQKDQNLGDMQERMLIEILVSSARQAAEGHPPVGRITGKKSLTAKERKLQAYDKMKLAEHLIPLLPQLLAKFSADAENVAPLLQLLSYFDLSIYCTQRLEKHLELLLQQLQEVVVKHVEPEVLEAAAHALYLLCKPEFTFFSRVDFARSQLVDFLTDRFQQELDDLMQSSFLDEDEVYSLTATLKRLSAFYNAHDLTRWEISEPCSRLLRKAVDTGEVPHQVILPALTLVYFSILWTVTHISESTSHKQLMSLKKRMVAFCELCQSCLSDVDPEIQEQAFVLLSDLLLIFSPQMIVGGRDFLRPLVFFPEATLQSELASFLMDHVFLQPGELGNGQSQEDHVQIELLHQRRRLLAGFCKLLLYGVLELDAASDVFKHYNKFYEDYGDIIKETLTRARQIDRCQCSRILLLSLKQLYTELIQEQGPQGLTELPAFIEMRDLARRFALSFGPQQLHNRDLVVMLHKEGIKFSLSELPPAGSSHEPPNLAFLELLSEFSPRLFHQDKRLLLSYLEKCLQRVSKAPNHPWGPVTTYCHSLHPLEITAEASPRGPPHSKKRCVEGPCRPQEEESSSQEESLQLNSGPTTPTLTSTAVKRKQSLRTVGKKQKGRPGPGPGPGPELICSQQLLGTQRLKMSSAPCFQIRCDPSGSGLGKQLTRLSLMEEDEEEELRLLDEEWQRGDKMLHSPSSPSEHGLDLLDTTELNMEDF.

Over residues 1–25 (MPTLWSPSTQHHGSSSGSESSPLQK) the composition is skewed to low complexity. Positions 1-108 (MPTLWSPSTQ…VSSGNGKNES (108 aa)) are disordered. Over residues 97-108 (RIVSSGNGKNES) the composition is skewed to polar residues. Residues 324–409 (FVHRYRDILP…NRFKDRMVSM (86 aa)) form the SCD domain. Disordered stretches follow at residues 1077-1154 (AEAS…PELI) and 1213-1240 (DKML…MEDF). Residues 1115–1125 (GPTTPTLTSTA) are compositionally biased toward polar residues. Basic residues predominate over residues 1126-1141 (VKRKQSLRTVGKKQKG). Ser-1218 carries the post-translational modification Phosphoserine.

The protein belongs to the SCC3 family. In terms of assembly, component of the meiosis-specific cohesin complex, which also contains the SMC1 (SMC1A or SMC1B) and SMC3 heterodimer. Such complex likely contains RAD21, or the meiosis-specific related protein REC8. Interacts with CCDC79/TERB1; recruiting cohesin to telomeres to develop structural rigidity. Post-translationally, phosphorylated. Testis specific.

Its subcellular location is the nucleus. It is found in the chromosome. The protein localises to the centromere. In terms of biological role, meiosis specific component of cohesin complex. The cohesin complex is required for the cohesion of sister chromatids after DNA replication. The cohesin complex apparently forms a large proteinaceous ring within which sister chromatids can be trapped. At anaphase, the complex is cleaved and dissociates from chromatin, allowing sister chromatids to segregate. The meiosis-specific cohesin complex probably replaces mitosis specific cohesin complex when it dissociates from chromatin during prophase I. The chain is Cohesin subunit SA-3 (Stag3) from Mus musculus (Mouse).